A 65-amino-acid chain; its full sequence is Small ribosomal subunit protein bS21 (65 aa).

Belongs to the bacterial ribosomal protein bS21 family.

This Chlorobaculum parvum (strain DSM 263 / NCIMB 8327) (Chlorobium vibrioforme subsp. thiosulfatophilum) protein is Small ribosomal subunit protein bS21.